The following is a 244-amino-acid chain: 1-(5-phosphoribosyl)-5-[(5-phosphoribosylamino)methylideneamino] imidazole-4-carboxamide isomerase (244 aa).

Residue Asp15 is the Proton acceptor of the active site. Asp136 functions as the Proton donor in the catalytic mechanism.

Belongs to the HisA/HisF family.

The protein localises to the cytoplasm. It catalyses the reaction 1-(5-phospho-beta-D-ribosyl)-5-[(5-phospho-beta-D-ribosylamino)methylideneamino]imidazole-4-carboxamide = 5-[(5-phospho-1-deoxy-D-ribulos-1-ylimino)methylamino]-1-(5-phospho-beta-D-ribosyl)imidazole-4-carboxamide. Its pathway is amino-acid biosynthesis; L-histidine biosynthesis; L-histidine from 5-phospho-alpha-D-ribose 1-diphosphate: step 4/9. The polypeptide is 1-(5-phosphoribosyl)-5-[(5-phosphoribosylamino)methylideneamino] imidazole-4-carboxamide isomerase (Dehalococcoides mccartyi (strain CBDB1)).